We begin with the raw amino-acid sequence, 1392 residues long: DNA-directed RNA polymerase subunit beta (1392 aa).

Belongs to the RNA polymerase beta chain family. In terms of assembly, the RNAP catalytic core consists of 2 alpha, 1 beta, 1 beta' and 1 omega subunit. When a sigma factor is associated with the core the holoenzyme is formed, which can initiate transcription.

The catalysed reaction is RNA(n) + a ribonucleoside 5'-triphosphate = RNA(n+1) + diphosphate. Its function is as follows. DNA-dependent RNA polymerase catalyzes the transcription of DNA into RNA using the four ribonucleoside triphosphates as substrates. This is DNA-directed RNA polymerase subunit beta from Neisseria meningitidis serogroup A / serotype 4A (strain DSM 15465 / Z2491).